Consider the following 195-residue polypeptide: RILP-like protein 2 (195 aa).

An RH1 domain is found at 8 to 92; it reads SPTQAFDKDV…RTETDRVVAE (85 aa). Positions 58-149 form a coiled coil; sequence LEMFETMVNK…AQEELQLYKS (92 aa). An RH2 domain is found at 115-185; it reads RPRFTMQELK…ITEESKEKST (71 aa).

This sequence belongs to the RILPL family.

The protein resides in the cytoplasm. It is found in the cytosol. It localises to the cytoskeleton. The protein localises to the microtubule organizing center. Its subcellular location is the centrosome. The protein resides in the cell projection. It is found in the cilium. Its function is as follows. Involved in cell shape and neuronal morphogenesis, positively regulating the establishment and maintenance of dendritic spines. Plays a role in cellular protein transport. This Danio rerio (Zebrafish) protein is RILP-like protein 2 (rilpl2).